The sequence spans 127 residues: Glycine cleavage system H protein (127 aa).

Positions 24 to 106 (VVTVGVTFHA…YGAGWFFKLK (83 aa)) constitute a Lipoyl-binding domain. Lys-65 is modified (N6-lipoyllysine).

Belongs to the GcvH family. In terms of assembly, the glycine cleavage system is composed of four proteins: P, T, L and H. (R)-lipoate serves as cofactor.

The glycine cleavage system catalyzes the degradation of glycine. The H protein shuttles the methylamine group of glycine from the P protein to the T protein. The sequence is that of Glycine cleavage system H protein from Laribacter hongkongensis (strain HLHK9).